A 137-amino-acid chain; its full sequence is Acetyltransferase Atu2258 (137 aa).

The N-acetyltransferase domain occupies methionine 1–phenylalanine 137. CoA is bound by residues leucine 66 to valine 68, glycine 74, and arginine 108 to tyrosine 110.

In terms of biological role, catalyzes the transfer of an acetyl group from acetyl coenzyme A (AcCoA) to an acceptor substrate and releases both CoA and the acetylated product. It prefers glucosamine 6-phosphate or dopamine. It can also use the thialysine, N(8)-acetylspermidine, chloramphenicol, puromycin, polymyxin B, and 4-aminobutyrate ethyl ester. In Agrobacterium fabrum (strain C58 / ATCC 33970) (Agrobacterium tumefaciens (strain C58)), this protein is Acetyltransferase Atu2258.